Consider the following 392-residue polypeptide: Phosphoglycerate kinase (392 aa).

Residues D21–N23, R36, H59–R62, R113, and R146 contribute to the substrate site. Residues K197, E319, and G345–T348 each bind ATP.

The protein belongs to the phosphoglycerate kinase family. Monomer.

It localises to the cytoplasm. It carries out the reaction (2R)-3-phosphoglycerate + ATP = (2R)-3-phospho-glyceroyl phosphate + ADP. Its pathway is carbohydrate degradation; glycolysis; pyruvate from D-glyceraldehyde 3-phosphate: step 2/5. This chain is Phosphoglycerate kinase, found in Nitrosococcus oceani (strain ATCC 19707 / BCRC 17464 / JCM 30415 / NCIMB 11848 / C-107).